Here is a 165-residue protein sequence, read N- to C-terminus: Disulfide bond formation protein B (165 aa).

Topologically, residues 1–16 (MTILNSLNQFSKGRLS) are cytoplasmic. The chain crosses the membrane as a helical span at residues 17–33 (WLLLLLFVVFFEACALY). Residues 34–51 (FQHVMMLAPCVMCIYERV) are Periplasmic-facing. C43 and C46 form a disulfide bridge. A helical transmembrane segment spans residues 52-67 (AMMGVGVAAIVGLMAP). The Cytoplasmic segment spans residues 68–74 (NNPIFRW). The helical transmembrane segment at 75–92 (LGLIGWGLSSYKGLLLAQ) threads the bilayer. Topologically, residues 93–147 (QHVDYQFNPSPFATCDLFVTFPSWRPLNQWAPWIFEAYGDCSKIVWQFLDLSMPQ) are periplasmic. Cysteines 107 and 133 form a disulfide. A helical membrane pass occupies residues 148-165 (WLVVIFAGNLIALALIVI).

Belongs to the DsbB family.

Its subcellular location is the cell inner membrane. In terms of biological role, required for disulfide bond formation in some periplasmic proteins. Acts by oxidizing the DsbA protein. In Vibrio alginolyticus, this protein is Disulfide bond formation protein B.